The sequence spans 99 residues: MPRSIKKGPFIDGHLLEKIQAAQATNAKKVIKTWSRRSTILPESVGLTFAVHNGRKFVPVFVTENMVGHKLGEFAPTRTFHGHSGDKKAKVAKGGPGGR.

A disordered region spans residues 77-99 (TRTFHGHSGDKKAKVAKGGPGGR).

Belongs to the universal ribosomal protein uS19 family.

In terms of biological role, protein S19 forms a complex with S13 that binds strongly to the 16S ribosomal RNA. The sequence is that of Small ribosomal subunit protein uS19 from Sorangium cellulosum (strain So ce56) (Polyangium cellulosum (strain So ce56)).